The following is a 177-amino-acid chain: Large ribosomal subunit protein uL6 (177 aa).

This sequence belongs to the universal ribosomal protein uL6 family. In terms of assembly, part of the 50S ribosomal subunit.

This protein binds to the 23S rRNA, and is important in its secondary structure. It is located near the subunit interface in the base of the L7/L12 stalk, and near the tRNA binding site of the peptidyltransferase center. The protein is Large ribosomal subunit protein uL6 of Paramagnetospirillum magneticum (strain ATCC 700264 / AMB-1) (Magnetospirillum magneticum).